The sequence spans 89 residues: MKQYIFFLALIVLVSTFAEAGKKTEILDKVKKVFSKAKDKILAGVEDLNNMSELGCPFIDKWCEDHCESKKLVGKCENFDCSCVKLGGK.

Residues 1–20 (MKQYIFFLALIVLVSTFAEA) form the signal peptide. The propeptide occupies 21–39 (GKKTEILDKVKKVFSKAKD). A BetaSPN-type CS-alpha/beta domain is found at 53–89 (ELGCPFIDKWCEDHCESKKLVGKCENFDCSCVKLGGK). 3 cysteine pairs are disulfide-bonded: C56–C76, C63–C81, and C67–C83.

This sequence belongs to the long chain scorpion toxin family. Class 2 subfamily. As to expression, expressed by the venom gland.

Its subcellular location is the secreted. Functionally, inhibits voltage-gated potassium channel. The polypeptide is Neurotoxin beta-KTx 12 (Lychas mucronatus (Chinese swimming scorpion)).